A 191-amino-acid polypeptide reads, in one-letter code: MLLSDRDILVEIDAGRVALEPYDPGMLQPSSIDVRLDRFFRVFENHKYPHIDPAADQSDLTRMVEPEGDEPFILHPGEFVLGSTYEVVTLPDDIAARVEGKSSLGRLGLLTHATAGFVDPGFSGHVTLELANVATLPIKLYPGMKIGQFCFFRLSSPSEHPYGSAKYGSRYQGQRGPTPSRSYQNFHRTPI.

DCTP is bound by residues 101 to 106, Asp-119, 127 to 129, Gln-148, Tyr-162, and Gln-174; these read KSSLGR and TLE. Catalysis depends on Glu-129, which acts as the Proton donor/acceptor. The segment at 163–191 is disordered; the sequence is GSAKYGSRYQGQRGPTPSRSYQNFHRTPI. The span at 171-191 shows a compositional bias: polar residues; the sequence is YQGQRGPTPSRSYQNFHRTPI.

Belongs to the dCTP deaminase family. Homotrimer.

It carries out the reaction dCTP + 2 H2O = dUMP + NH4(+) + diphosphate. It participates in pyrimidine metabolism; dUMP biosynthesis; dUMP from dCTP: step 1/1. In terms of biological role, bifunctional enzyme that catalyzes both the deamination of dCTP to dUTP and the hydrolysis of dUTP to dUMP without releasing the toxic dUTP intermediate. This Nocardioides sp. (strain ATCC BAA-499 / JS614) protein is dCTP deaminase, dUMP-forming.